The chain runs to 362 residues: Tryptophan 2,3-dioxygenase (362 aa).

Substrate-binding positions include 40–44 and arginine 111; that span reads FIIVH. Histidine 297 is a heme binding site. Residue threonine 311 coordinates substrate.

The protein belongs to the tryptophan 2,3-dioxygenase family. As to quaternary structure, homotetramer. Requires heme as cofactor.

It catalyses the reaction L-tryptophan + O2 = N-formyl-L-kynurenine. It participates in amino-acid degradation; L-tryptophan degradation via kynurenine pathway; L-kynurenine from L-tryptophan: step 1/2. Heme-dependent dioxygenase that catalyzes the oxidative cleavage of the L-tryptophan (L-Trp) pyrrole ring and converts L-tryptophan to N-formyl-L-kynurenine. Catalyzes the oxidative cleavage of the indole moiety. This chain is Tryptophan 2,3-dioxygenase, found in Alteromonas mediterranea (strain DSM 17117 / CIP 110805 / LMG 28347 / Deep ecotype).